The sequence spans 293 residues: DNA-directed RNA polymerase III subunit rpc6 (293 aa).

The protein belongs to the eukaryotic RPC34/RPC39 RNA polymerase subunit family. Component of the RNA polymerase III (Pol III) complex.

The protein localises to the nucleus. In terms of biological role, DNA-dependent RNA polymerase catalyzes the transcription of DNA into RNA using the four ribonucleoside triphosphates as substrates. Specific peripheric component of RNA polymerase III which synthesizes small RNAs, such as 5S rRNA and tRNAs. May direct RNA Pol III binding to the TFIIIB-DNA complex. The polypeptide is DNA-directed RNA polymerase III subunit rpc6 (polr3f) (Dictyostelium discoideum (Social amoeba)).